Here is a 539-residue protein sequence, read N- to C-terminus: MVKEIKFSEDARRAMLAGVDKLADAVKVTLGPKGRNVVLDKKFVAPLITNDGVTIAKEIELEDPYENMGAKLVAEVANKTNEIAGDGTTTATVLAQAMIQEGLKNVTSGANPVGIRQGIDKAVAVALEELAAISKTVSSKEEIAQVGSISAADEEIGQFISEAMEKVGNDGVITIEESKGFKTELEVVEGMQFDRGYASPYMVTDSDKMIADLENPYILITDKKISSFQDILPILEQIVQTSRPILIVAEDVDGDALTNIVLNRLRGTFTAVAVKAPGFGDRRKAMLEDLAILTGGQVITDDLGLDLKDTTVEMLGNAGKVHVTKDNTTIVEGRGDASNIDARVGQLKAQIEETTSEFDKEKLQERLAKLAGGVAVIKVGAATETELKERKLRIEDALNSTRAAVEEGIVAGGGTALVSIYNKVAAVEATGDVATGVKIVLKALEAPIRQIAENAGLEGSVIVEKIKHAETGVGYNAATDEWVNMIDAGIVDPTKVTRSALQNAASVAAMFLTTEAVVAEMPEENPTPDMGMGGMPGMM.

Residues 29–32, 86–90, Gly413, 476–478, and Asp492 each bind ATP; these read TLGP, DGTTT, and NAA.

Belongs to the chaperonin (HSP60) family. As to quaternary structure, forms a cylinder of 14 subunits composed of two heptameric rings stacked back-to-back. Interacts with the co-chaperonin GroES.

It localises to the cytoplasm. It catalyses the reaction ATP + H2O + a folded polypeptide = ADP + phosphate + an unfolded polypeptide.. Together with its co-chaperonin GroES, plays an essential role in assisting protein folding. The GroEL-GroES system forms a nano-cage that allows encapsulation of the non-native substrate proteins and provides a physical environment optimized to promote and accelerate protein folding. In Macrococcus caseolyticus (strain JCSC5402) (Macrococcoides caseolyticum), this protein is Chaperonin GroEL.